The following is a 98-amino-acid chain: uncharacterized protein (98 aa).

Belongs to the HesB/IscA family.

This is an uncharacterized protein from Staphylococcus aureus (strain USA300).